We begin with the raw amino-acid sequence, 298 residues long: Putative olfactory receptor 10D4 (298 aa).

Residues 1 to 23 (MRNHTMVTEFILLGIPETEGLET) are Extracellular-facing. A glycan (N-linked (GlcNAc...) asparagine) is linked at Asn-3. The helical transmembrane segment at 24–44 (ALLFLFSSFYLCTLLGNVLIL) threads the bilayer. Residues 45–52 (TAIISSTR) lie on the Cytoplasmic side of the membrane. The chain crosses the membrane as a helical span at residues 53–73 (LHTPMYFFLGNLSIFDLGFSS). Residues 74–97 (TTVPKMLFYLSGNSHAISYAGCVS) lie on the Extracellular side of the membrane. Cys-95 and Cys-187 are oxidised to a cystine. A helical transmembrane segment spans residues 98-118 (QLFFYHFLGCTECFLYTVMAC). The Cytoplasmic portion of the chain corresponds to 119 to 137 (DRFVAICFPLRYTVIMNHR). Residues 138–158 (VCFMLATGTWMIGCVHAMILT) form a helical membrane-spanning segment. Residues 159–195 (PLTFQLPYCGPNKVGYYFCDIPAVLPLACKDTSLAQR) are Extracellular-facing. Residues 196-215 (VGFTNVGLLSLICFFLILVS) form a helical membrane-spanning segment. Topologically, residues 216 to 235 (YTCIGISISKIRSAEGRQRA) are cytoplasmic. A helical membrane pass occupies residues 236-256 (FSTCSAHLTAILCAYGPVIVI). Residues 257–267 (YLQPNPSALLG) lie on the Extracellular side of the membrane. A helical membrane pass occupies residues 268-288 (SIIQILNNLVTPMLNPLIYSL). The Cytoplasmic portion of the chain corresponds to 289-298 (RNKDVKSDQP).

The protein belongs to the G-protein coupled receptor 1 family.

The protein resides in the cell membrane. In terms of biological role, odorant receptor. This chain is Putative olfactory receptor 10D4 (OR10D4P), found in Homo sapiens (Human).